A 49-amino-acid polypeptide reads, in one-letter code: MRVNITLACTECGDRNYITKKNKRNNPERIELKKYCPRLKRVTLHRETK.

It belongs to the bacterial ribosomal protein bL33 family.

The polypeptide is Large ribosomal subunit protein bL33B (Bacillus cytotoxicus (strain DSM 22905 / CIP 110041 / 391-98 / NVH 391-98)).